The primary structure comprises 98 residues: Protein E7 (98 aa).

The interval 1–42 (MHGRHVTLKDIVLDLQPPDPVGLHCYEQLVDSSEDEVDEVDG) is E7 terminal domain. An LXCXE motif; interaction with host RB1 and TMEM173/STING motif is present at residues 23 to 27 (LHCYE). Residues 58–94 (CCGCDSNVRLVVQCTETDIREVQQLLLGTLDIVCPIC) fold into a zinc finger. Residues 76 to 84 (IREVQQLLL) carry the Nuclear export signal motif.

The protein belongs to the papillomaviridae E7 protein family. Homodimer. Homooligomer. Interacts with host RB1; this interaction induces dissociation of RB1-E2F1 complex thereby disrupting RB1 activity. Interacts with host EP300; this interaction represses EP300 transcriptional activity. Interacts with protein E2; this interaction inhibits E7 oncogenic activity. Interacts with host TMEM173/STING; this interaction impairs the ability of TMEM173/STING to sense cytosolic DNA and promote the production of type I interferon (IFN-alpha and IFN-beta). Highly phosphorylated.

The protein localises to the host cytoplasm. It is found in the host nucleus. In terms of biological role, plays a role in viral genome replication by driving entry of quiescent cells into the cell cycle. Stimulation of progression from G1 to S phase allows the virus to efficiently use the cellular DNA replicating machinery to achieve viral genome replication. E7 protein has both transforming and trans-activating activities. Induces the disassembly of the E2F1 transcription factor from RB1, with subsequent transcriptional activation of E2F1-regulated S-phase genes. Interferes with host histone deacetylation mediated by HDAC1 and HDAC2, leading to transcription activation. Also plays a role in the inhibition of both antiviral and antiproliferative functions of host interferon alpha. Interaction with host TMEM173/STING impairs the ability of TMEM173/STING to sense cytosolic DNA and promote the production of type I interferon (IFN-alpha and IFN-beta). The chain is Protein E7 from Homo sapiens (Human).